The chain runs to 556 residues: Acetyl-coenzyme A thioesterase (556 aa).

In terms of domain architecture, HotDog ACOT-type 1 spans 6–118 (APGEVLMSQA…FSTFVAKPVG (113 aa)). Position 34 is an N6-succinyllysine (lysine 34). CoA is bound by residues 54–56 (TAS) and 83–85 (STS). At lysine 97 the chain carries N6-succinyllysine. Arginine 145 contributes to the CoA binding site. Lysine 160 and lysine 229 each carry N6-succinyllysine. A HotDog ACOT-type 2 domain is found at 180–295 (MGTSVQSIEL…FLIYNAVDDQ (116 aa)). CoA is bound at residue 235-237 (KFR). One can recognise an START domain in the interval 327–536 (GRKYVISHKK…GGWSKSIEEA (210 aa)).

As to quaternary structure, homodimer or homotetramer.

It localises to the cytoplasm. Its subcellular location is the cytosol. The enzyme catalyses acetyl-CoA + H2O = acetate + CoA + H(+). The catalysed reaction is butanoyl-CoA + H2O = butanoate + CoA + H(+). It carries out the reaction hexanoyl-CoA + H2O = hexanoate + CoA + H(+). It functions in the pathway lipid metabolism; fatty acid metabolism. With respect to regulation, allosterically regulated by ATP (activator) and ADP (inhibitor). Cold labile, it dissociates into inactive monomers at low temperature. Catalyzes the hydrolysis of acyl-CoAs into free fatty acids and coenzyme A (CoASH), regulating their respective intracellular levels. Preferentially hydrolyzes acetyl-CoA. The chain is Acetyl-coenzyme A thioesterase (Acot12) from Mus musculus (Mouse).